We begin with the raw amino-acid sequence, 260 residues long: Proteasome assembly chaperone 2 (260 aa).

This sequence belongs to the PSMG2 family. As to quaternary structure, forms a heterodimer with psmg1. Post-translationally, degraded by the proteasome upon completion of 20S proteasome maturation.

Its subcellular location is the nucleus. Chaperone protein which promotes assembly of the 20S proteasome as part of a heterodimer with psmg1. The chain is Proteasome assembly chaperone 2 from Danio rerio (Zebrafish).